Consider the following 395-residue polypeptide: 1-deoxy-D-xylulose 5-phosphate reductoisomerase (395 aa).

The NADPH site is built by Thr-10, Gly-11, Ser-12, Ile-13, Asn-38, and Asn-122. Lys-123 lines the 1-deoxy-D-xylulose 5-phosphate pocket. Residue Glu-124 coordinates NADPH. Asp-148 serves as a coordination point for Mn(2+). The 1-deoxy-D-xylulose 5-phosphate site is built by Ser-149, Glu-150, Ser-178, and His-200. Glu-150 contacts Mn(2+). Residue Gly-206 coordinates NADPH. 1-deoxy-D-xylulose 5-phosphate-binding residues include Ser-213, Asn-218, Lys-219, and Glu-222. Glu-222 is a Mn(2+) binding site.

Belongs to the DXR family. Mg(2+) serves as cofactor. The cofactor is Mn(2+).

The enzyme catalyses 2-C-methyl-D-erythritol 4-phosphate + NADP(+) = 1-deoxy-D-xylulose 5-phosphate + NADPH + H(+). The protein operates within isoprenoid biosynthesis; isopentenyl diphosphate biosynthesis via DXP pathway; isopentenyl diphosphate from 1-deoxy-D-xylulose 5-phosphate: step 1/6. In terms of biological role, catalyzes the NADPH-dependent rearrangement and reduction of 1-deoxy-D-xylulose-5-phosphate (DXP) to 2-C-methyl-D-erythritol 4-phosphate (MEP). The sequence is that of 1-deoxy-D-xylulose 5-phosphate reductoisomerase from Elusimicrobium minutum (strain Pei191).